We begin with the raw amino-acid sequence, 698 residues long: Polyribonucleotide nucleotidyltransferase (698 aa).

Residues Asp-490 and Asp-496 each coordinate Mg(2+). Residues 557-616 form the KH domain; sequence PKVVTMTIKPDKIRDVIGPGGKKINEIIDETGVKLDIEQDGTIFIGAVDQAMINRAREII. Positions 626-694 constitute an S1 motif domain; sequence GQTYQATVKR…KQGRVNASHR (69 aa).

The protein belongs to the polyribonucleotide nucleotidyltransferase family. It depends on Mg(2+) as a cofactor.

Its subcellular location is the cytoplasm. The catalysed reaction is RNA(n+1) + phosphate = RNA(n) + a ribonucleoside 5'-diphosphate. Its function is as follows. Involved in mRNA degradation. Catalyzes the phosphorolysis of single-stranded polyribonucleotides processively in the 3'- to 5'-direction. This chain is Polyribonucleotide nucleotidyltransferase, found in Staphylococcus aureus (strain MSSA476).